The sequence spans 290 residues: MGTEDAIALPNSTLEPRTEAKQRLSSKSHQVSAKVTIPAKEEISSSDDDAHVPVTEIHLKSHEWFGDFITKHEIPRKVFHSSIGFITLYLYTQGINYKNVLWPLIYAFIILFILDLIRLNWPFFNMLYCRTVGALMRKKEIHTYNGVLWYILGLIFSFNFFSKDVTLISLFLLSWSDTAAATIGRKYGHLTPKVARNKSLAGSIAAFTVGVITCWVFYGYFVPAYSYVNKPGEIQWSPETSRLSLNMLSLLGGVVAALSEGIDLFNWDDNFTIPVLSSLFMNAVIKTFKK.

The interval 1 to 33 is disordered; the sequence is MGTEDAIALPNSTLEPRTEAKQRLSSKSHQVSA. Residues 1-77 lie on the Lumenal side of the membrane; the sequence is MGTEDAIALP…FITKHEIPRK (77 aa). N11 carries N-linked (GlcNAc...) asparagine glycosylation. The segment covering 23-33 has biased composition (polar residues); the sequence is RLSSKSHQVSA. Phosphoserine is present on residues S44, S45, and S46. A helical membrane pass occupies residues 78-95; it reads VFHSSIGFITLYLYTQGI. The Cytoplasmic segment spans residues 96-103; the sequence is NYKNVLWP. The chain crosses the membrane as a helical span at residues 104 to 124; sequence LIYAFIILFILDLIRLNWPFF. Topologically, residues 125 to 140 are lumenal; sequence NMLYCRTVGALMRKKE. The helical transmembrane segment at 141-161 threads the bilayer; that stretch reads IHTYNGVLWYILGLIFSFNFF. Topologically, residues 162 to 163 are cytoplasmic; the sequence is SK. A helical membrane pass occupies residues 164–184; sequence DVTLISLFLLSWSDTAAATIG. Residues 185–203 lie on the Lumenal side of the membrane; the sequence is RKYGHLTPKVARNKSLAGS. N-linked (GlcNAc...) asparagine glycosylation occurs at N197. The helical transmembrane segment at 204–224 threads the bilayer; the sequence is IAAFTVGVITCWVFYGYFVPA. Residues 225–244 are Cytoplasmic-facing; that stretch reads YSYVNKPGEIQWSPETSRLS. A helical transmembrane segment spans residues 245 to 265; it reads LNMLSLLGGVVAALSEGIDLF. Topologically, residues 266-290 are lumenal; that stretch reads NWDDNFTIPVLSSLFMNAVIKTFKK. An N-linked (GlcNAc...) asparagine glycan is attached at N270.

The protein belongs to the DGK1 family. Ca(2+) is required as a cofactor. It depends on Mg(2+) as a cofactor. Post-translationally, CKII-mediated phosphorylation of Ser-45 and Ser-46 regulates its function in the production of PA.

It is found in the endoplasmic reticulum membrane. It localises to the nucleus membrane. The catalysed reaction is a 1,2-diacyl-sn-glycerol + CTP = a 1,2-diacyl-sn-glycero-3-phosphate + CDP + H(+). The enzyme catalyses 1,2-di-(9Z-octadecenoyl)-sn-glycerol + CTP = 1,2-di-(9Z-octadecenoyl)-sn-glycero-3-phosphate + CDP + H(+). Inhibited by N-ethylmaleimide, dCTP, and sphingoid bases including sphinganine, sphingosine and phytosphingosine. DAG pyrophosphate, cardiolipin, CDP-DAG, and lyso-PA inhibited activity by 23-66%. Also inhibited by Ca(2+) concentrations of more than 1 mM, by addition of EDTA or EGTA at 5 mM, and by 5 mM Mn(2+) and Zn(2+). Stimulated by major membrane phospholipids including phosphatidylcholine, phosphatidylethanolamine, phosphatidylinositol, phosphatidylserine, phosphatidylglycerol, and phosphatidate. Also stimulated to a maximum by addition of TritonX-100 at a concentration of 1 mM, followed by an apparent inhibition of activity at concentrations above 1 mM. Its function is as follows. CTP-dependent diacylglycerol kinase that catalyzes the phosphorylation of diacylglycerol (DAG) to phosphatidate (PA). Controls phosphatidate levels at the nuclear envelope. Counteracts the activity of PA phosphatase PAH1/SMP2, controlling the levels of PA and DAG for the synthesis of triacylglycerol and membrane phospholipids. May be involved in vesicle trafficking between the endoplasmic reticulum and the Golgi apparatus. Required to convert triacylglycerol-derived DAG to PA for phospholipid synthesis during growth resumption from stationary phase in the absence of de novo fatty acid synthesis. Involved in the resistance to nickel chloride and nalidixic acid. The sequence is that of CTP-dependent diacylglycerol kinase 1 (DGK1) from Saccharomyces cerevisiae (strain ATCC 204508 / S288c) (Baker's yeast).